The following is a 690-amino-acid chain: Glycine--tRNA ligase 1, mitochondrial (690 aa).

The N-terminal 24 residues, 1 to 24, are a transit peptide targeting the mitochondrion; that stretch reads MSFFNISRRFYSQIVKKSVKIKRM. N-acetylserine is present on Ser25. At Ser226 the chain carries Phosphoserine. Glu251 is a binding site for glycine. ATP is bound by residues 283-285 and 294-295; these read RNE and RV. Glu302 is a binding site for glycine. 410 to 411 is a binding site for ATP; the sequence is EC. Phosphoserine occurs at positions 476 and 528. Position 531–533 (531–533) interacts with glycine; sequence EPS. Arg538 contributes to the ATP binding site. Position 689 is a phosphothreonine (Thr689).

It belongs to the class-II aminoacyl-tRNA synthetase family. As to quaternary structure, homodimer.

The protein localises to the cytoplasm. It localises to the mitochondrion matrix. It carries out the reaction tRNA(Gly) + glycine + ATP = glycyl-tRNA(Gly) + AMP + diphosphate. The catalysed reaction is 2 ATP + H(+) = P(1),P(4)-bis(5'-adenosyl) tetraphosphate + diphosphate. Its function is as follows. Catalyzes the ATP-dependent ligation of glycine to the 3'-end of its cognate tRNA, via the formation of an aminoacyl-adenylate intermediate (Gly-AMP). Also produces diadenosine tetraphosphate (Ap4A), a universal pleiotropic signaling molecule needed for cell regulation pathways, by direct condensation of 2 ATPs. Thereby, may play a special role in Ap4A homeostasis. This chain is Glycine--tRNA ligase 1, mitochondrial (GRS1), found in Saccharomyces cerevisiae (strain ATCC 204508 / S288c) (Baker's yeast).